Consider the following 125-residue polypeptide: Oxytocin-neurophysin 1 (125 aa).

A signal peptide spans 1-19 (MAGSSLACCLLGLLALTSA). A disulfide bridge connects residues Cys-20 and Cys-25. Gly-28 bears the Glycine amide mark. Intrachain disulfides connect Cys-41/Cys-85, Cys-44/Cys-58, Cys-52/Cys-75, Cys-59/Cys-65, Cys-92/Cys-104, Cys-98/Cys-116, and Cys-105/Cys-110.

It belongs to the vasopressin/oxytocin family. As to quaternary structure, interacts with oxytocin receptor (Ki=1.5 nM). Interacts with vasopressin V1aR/AVPR1A (Ki=37 nM), V1bR/AVPR1B (Ki=222 nM), and V2R/AVPR2 receptors (Ki=823 nM).

Functionally, neurophysin 1 specifically binds oxytocin. Its function is as follows. Oxytocin causes contraction of the smooth muscle of the uterus and of the mammary gland. Acts by binding to oxytocin receptor (OXTR). The polypeptide is Oxytocin-neurophysin 1 (OXT) (Ovis aries (Sheep)).